The primary structure comprises 103 residues: Large ribosomal subunit protein bL36m (103 aa).

Belongs to the bacterial ribosomal protein bL36 family. Component of the mitochondrial large ribosomal subunit (mt-LSU). Mature mammalian 55S mitochondrial ribosomes consist of a small (28S) and a large (39S) subunit. The 28S small subunit contains a 12S ribosomal RNA (12S mt-rRNA) and 30 different proteins. The 39S large subunit contains a 16S rRNA (16S mt-rRNA), a copy of mitochondrial valine transfer RNA (mt-tRNA(Val)), which plays an integral structural role, and 52 different proteins. bL36m has a zinc binding site.

It is found in the mitochondrion. This Homo sapiens (Human) protein is Large ribosomal subunit protein bL36m (MRPL36).